Consider the following 189-residue polypeptide: Adenylate kinase (189 aa).

10 to 15 (GAGKGT) contacts ATP. Residues 30 to 59 (STGDIFRANVSGGTELGKKAQAYMDRGDLV) form an NMP region. Residues threonine 31, arginine 36, 57 to 59 (DLV), 85 to 88 (GFPR), and glutamine 92 each bind AMP. Residues 126 to 136 (ERARIDNRSDD) form an LID region. Residue arginine 127 participates in ATP binding. Residues arginine 133 and arginine 144 each contribute to the AMP site. Glycine 172 contributes to the ATP binding site.

This sequence belongs to the adenylate kinase family. Monomer.

It is found in the cytoplasm. It catalyses the reaction AMP + ATP = 2 ADP. Its pathway is purine metabolism; AMP biosynthesis via salvage pathway; AMP from ADP: step 1/1. Functionally, catalyzes the reversible transfer of the terminal phosphate group between ATP and AMP. Plays an important role in cellular energy homeostasis and in adenine nucleotide metabolism. This chain is Adenylate kinase, found in Thermobifida fusca (strain YX).